Here is a 142-residue protein sequence, read N- to C-terminus: Universal stress protein D (142 aa).

Belongs to the universal stress protein A family.

It is found in the cytoplasm. Its function is as follows. Required for resistance to DNA-damaging agents. The protein is Universal stress protein D (uspD) of Escherichia coli O157:H7.